Reading from the N-terminus, the 182-residue chain is Ribosome maturation factor RimM (182 aa).

The PRC barrel domain occupies 102–182 (EEGDYYWKDL…TIEVDWDPGF (81 aa)).

The protein belongs to the RimM family. In terms of assembly, binds ribosomal protein uS19.

The protein resides in the cytoplasm. In terms of biological role, an accessory protein needed during the final step in the assembly of 30S ribosomal subunit, possibly for assembly of the head region. Essential for efficient processing of 16S rRNA. May be needed both before and after RbfA during the maturation of 16S rRNA. It has affinity for free ribosomal 30S subunits but not for 70S ribosomes. The sequence is that of Ribosome maturation factor RimM from Salmonella enteritidis PT4 (strain P125109).